The following is a 192-amino-acid chain: Phosphomevalonate kinase (192 aa).

ATP contacts are provided by residues 17 to 23 (KRKSGKD) and Arg-141. Position 170 (Asn-170) interacts with substrate. His-171 and Gln-180 together coordinate ATP.

Monomer.

Its subcellular location is the cytoplasm. The protein localises to the cytosol. The catalysed reaction is (R)-5-phosphomevalonate + ATP = (R)-5-diphosphomevalonate + ADP. It functions in the pathway isoprenoid biosynthesis; isopentenyl diphosphate biosynthesis via mevalonate pathway; isopentenyl diphosphate from (R)-mevalonate: step 2/3. Functionally, catalyzes the reversible ATP-dependent phosphorylation of mevalonate 5-phosphate to produce mevalonate diphosphate and ADP, a key step in the mevalonic acid mediated biosynthesis of isopentenyl diphosphate and other polyisoprenoid metabolites. This is Phosphomevalonate kinase (Pmvk) from Mus musculus (Mouse).